The following is a 60-amino-acid chain: Large ribosomal subunit protein bL33 (60 aa).

Belongs to the bacterial ribosomal protein bL33 family.

This is Large ribosomal subunit protein bL33 from Cytophaga hutchinsonii (strain ATCC 33406 / DSM 1761 / CIP 103989 / NBRC 15051 / NCIMB 9469 / D465).